Here is a 569-residue protein sequence, read N- to C-terminus: Proline--tRNA ligase (569 aa).

This sequence belongs to the class-II aminoacyl-tRNA synthetase family. ProS type 1 subfamily. As to quaternary structure, homodimer.

Its subcellular location is the cytoplasm. The enzyme catalyses tRNA(Pro) + L-proline + ATP = L-prolyl-tRNA(Pro) + AMP + diphosphate. Its function is as follows. Catalyzes the attachment of proline to tRNA(Pro) in a two-step reaction: proline is first activated by ATP to form Pro-AMP and then transferred to the acceptor end of tRNA(Pro). As ProRS can inadvertently accommodate and process non-cognate amino acids such as alanine and cysteine, to avoid such errors it has two additional distinct editing activities against alanine. One activity is designated as 'pretransfer' editing and involves the tRNA(Pro)-independent hydrolysis of activated Ala-AMP. The other activity is designated 'posttransfer' editing and involves deacylation of mischarged Ala-tRNA(Pro). The misacylated Cys-tRNA(Pro) is not edited by ProRS. The polypeptide is Proline--tRNA ligase (Colwellia psychrerythraea (strain 34H / ATCC BAA-681) (Vibrio psychroerythus)).